The chain runs to 474 residues: Glutamate--tRNA ligase 1 (474 aa).

The 'HIGH' region motif lies at 10-20; the sequence is PSPTGFLHIGG. Residues 239-243 carry the 'KMSKS' region motif; sequence KLSKR. Residue K242 participates in ATP binding.

This sequence belongs to the class-I aminoacyl-tRNA synthetase family. Glutamate--tRNA ligase type 1 subfamily. In terms of assembly, monomer.

It localises to the cytoplasm. It catalyses the reaction tRNA(Glu) + L-glutamate + ATP = L-glutamyl-tRNA(Glu) + AMP + diphosphate. In terms of biological role, catalyzes the attachment of glutamate to tRNA(Glu) in a two-step reaction: glutamate is first activated by ATP to form Glu-AMP and then transferred to the acceptor end of tRNA(Glu). The sequence is that of Glutamate--tRNA ligase 1 from Methylobacterium sp. (strain 4-46).